The sequence spans 443 residues: Zinc finger CCCH domain-containing protein 63 (443 aa).

Disordered regions lie at residues 1-29 (MDFD…MAPT) and 56-99 (LPGP…SSSW). 2 C3H1-type zinc fingers span residues 30 to 56 (DTRQ…HREL) and 109 to 136 (TKTE…HCWS). WD repeat units follow at residues 149-190 (GHEK…GVLK), 228-265 (GPVG…NCFE), 272-311 (GHTL…QTLT), 313-349 (HSSV…NLEV), 354-396 (KEEH…LFIR), and 404-442 (FAKQ…TAAL).

This Arabidopsis thaliana (Mouse-ear cress) protein is Zinc finger CCCH domain-containing protein 63 (ZFWD2).